Here is a 317-residue protein sequence, read N- to C-terminus: DNA-directed RNA polymerase subunit alpha (317 aa).

The segment at 1-229 is alpha N-terminal domain (alpha-NTD); that stretch reads MLNEFIYPDK…KHYELLENIF (229 aa). Positions 245-317 are alpha C-terminal domain (alpha-CTD); the sequence is AEKLSLSIEE…ELGMNIETQR (73 aa).

This sequence belongs to the RNA polymerase alpha chain family. In terms of assembly, homodimer. The RNAP catalytic core consists of 2 alpha, 1 beta, 1 beta' and 1 omega subunit. When a sigma factor is associated with the core the holoenzyme is formed, which can initiate transcription.

It carries out the reaction RNA(n) + a ribonucleoside 5'-triphosphate = RNA(n+1) + diphosphate. In terms of biological role, DNA-dependent RNA polymerase catalyzes the transcription of DNA into RNA using the four ribonucleoside triphosphates as substrates. In Aquifex aeolicus (strain VF5), this protein is DNA-directed RNA polymerase subunit alpha.